The following is a 397-amino-acid chain: MSKIIAINAGSSSLKFQLFEMPSETVLTKGLVERIGLEDSIFTITVNGEKQKEITNIPDHAVAVNMLLKKLTENGIVKSLDEIGGIGHRVVHGGEKFADSVLIDAEVLADIEELSDLAPLHNPANLVGIKAFQEVLPNVPAVAVFDTAFHQTMPESAFLYSLPYEYYEKFGIRKYGFHGTSHKYVTERAAELLGRPIESLSLLSCHLGNGASIAAVEGGKSIDTSMGFTPLAGVTMGTRSGNIDPALIPYIMEKTGQTVEEVVSVLNKKSGMLGLTGYSSDLRDIIAKEEEGDHRAKVALDVFVSRIHKYIGSYTARMKGVDAIIFTAGVGENSAIIRERVLEGLEYMGVYFDVKRNNVFGEEAFISFPHSPVKIIVIPTDEEVMIARDVLRLGDIG.

A Mg(2+)-binding site is contributed by Asn-8. An ATP-binding site is contributed by Lys-15. Position 89 (Arg-89) interacts with substrate. Asp-146 serves as the catalytic Proton donor/acceptor. Residues 206 to 210, 281 to 283, and 329 to 333 each bind ATP; these read HLGNG, DLR, and GVGEN. Position 382 (Glu-382) interacts with Mg(2+).

It belongs to the acetokinase family. Homodimer. Requires Mg(2+) as cofactor. Mn(2+) is required as a cofactor.

It localises to the cytoplasm. The enzyme catalyses acetate + ATP = acetyl phosphate + ADP. It participates in metabolic intermediate biosynthesis; acetyl-CoA biosynthesis; acetyl-CoA from acetate: step 1/2. Catalyzes the formation of acetyl phosphate from acetate and ATP. Can also catalyze the reverse reaction. The protein is Acetate kinase of Bacillus mycoides (strain KBAB4) (Bacillus weihenstephanensis).